A 1044-amino-acid chain; its full sequence is Spindle assembly checkpoint serine/threonine-protein kinase bub1 (1044 aa).

The region spanning 36 to 204 is the BUB1 N-terminal domain; it reads FQEELDIIEE…SSPFPPPRIV (169 aa). Disordered stretches follow at residues 209–259, 317–343, 404–446, 484–555, and 685–705; these read PVSS…PLLY, VHHD…TPTR, ESLE…SQEE, KNSN…DSNS, and IKPK…SLDG. The segment covering 223-239 has biased composition (polar residues); the sequence is QVFSDASSSRDSQNASD. The span at 430 to 442 shows a compositional bias: polar residues; that stretch reads NSSNSGATSLTGR. The segment covering 504 to 518 has biased composition (low complexity); sequence STLQEETATGTTSTT. Residues 544 to 555 show a composition bias toward polar residues; it reads RSPQYSTVDSNS. T550 is subject to Phosphothreonine. The 327-residue stretch at 718 to 1044 folds into the Protein kinase domain; it reads LSVISKLGQG…LLKSIEKRKI (327 aa). Residues A728, F729, A730, K762, and D809 each contribute to the ATP site. D861 functions as the Proton acceptor in the catalytic mechanism. ATP contacts are provided by D865, N866, and D900.

Belongs to the protein kinase superfamily. Ser/Thr protein kinase family. BUB1 subfamily. In terms of assembly, part of the BUB1-BUB3 complex, composed of bub1 and bub3. Interacts with spc7 (when phosphorylated on MELT motifs); to recruit the bub1-bub3 complex to kinetochores. Interacts with mad3. In terms of processing, autophosphorylated.

The protein localises to the nucleus. The protein resides in the chromosome. Its subcellular location is the centromere. It is found in the kinetochore. The enzyme catalyses L-seryl-[protein] + ATP = O-phospho-L-seryl-[protein] + ADP + H(+). It catalyses the reaction L-threonyl-[protein] + ATP = O-phospho-L-threonyl-[protein] + ADP + H(+). Its function is as follows. Involved in mitotic spindle assembly checkpoint signaling, a process that delays anaphase until chromosomes are bioriented on the spindle, and in the repair of incorrect mitotic kinetochore-spindle microtubule attachments. Acts as a kinetochore scaffold for the recruitment of other spindle assembly checkpoint components. The sequence is that of Spindle assembly checkpoint serine/threonine-protein kinase bub1 from Schizosaccharomyces pombe (strain 972 / ATCC 24843) (Fission yeast).